We begin with the raw amino-acid sequence, 265 residues long: Polyglutamine-binding protein 1 (265 aa).

Positions 46–80 (EGLPPSWYKVFDPSCGLPYYWNADTDLVSWLSPHD) constitute a WW domain. Position 94 is a phosphoserine (Ser94). Residues 94 to 265 (SSNADAEEKL…AEASRTKQQD (172 aa)) are disordered. Residues 99–175 (AEEKLDRSHD…DKADREEGKE (77 aa)) are compositionally biased toward basic and acidic residues. Repeat copies occupy residues 104–110 (DRSHDKS), 111–117 (DRGHDKS), 118–124 (DRSHEKL), 125–131 (DRGHDKS), 132–138 (DRGHDKS), 139–140 (DR), 141–142 (DR), 143–144 (ER), 150–151 (DR), 152–153 (ER), 154–155 (ER), 156–157 (DR), 158–159 (ER), 160–161 (DR), and 162–163 (DR). The segment at 104–138 (DRSHDKSDRGHDKSDRSHEKLDRGHDKSDRGHDKS) is 5 X 7 AA approximate tandem repeats of D-R-[SG]-H-D-K-S. The 3 X 2 AA tandem repeats of [DE]-R stretch occupies residues 139 to 144 (DRDRER). Residues 150 to 163 (DRERERDRERDRDR) are 7 X 2 AA tandem repeats of [DE]-R. Positions 245–255 (YPSPGAVLRAN) are important for interaction with TXNL4A. At Ser247 the chain carries Phosphoserine.

Interacts with POU3F2/Brn-2, ATXN1, TXNL4A, HTT and AR. Interaction with ATXN1 correlates positively with the length of the polyglutamine tract. Interacts with RNA polymerase II large subunit in a phosphorylation-dependent manner. Forms a ternary complex with ATXN1 mutant and phosphorylated RNA polymerase II. Interacts (via C-terminus) with TXNL4A and CD2BP2. Interacts (via WW domain) with ATN1 and SF3B1, and may interact with additional splice factors. Interacts (via WW domain) with WBP11; Leading to reduce interaction between PQBP1 and TXNL4A. Interacts with CAPRIN1. Interacts with DDX1. Interacts with SFPQ. Interacts with KHSRP.

The protein resides in the nucleus. The protein localises to the nucleus speckle. Its subcellular location is the cytoplasmic granule. Functionally, intrinsically disordered protein that acts as a scaffold, and which is involved in different processes, such as pre-mRNA splicing, transcription regulation, innate immunity and neuron development. Interacts with splicing-related factors via the intrinsically disordered region and regulates alternative splicing of target pre-mRNA species. May suppress the ability of POU3F2 to transactivate the DRD1 gene in a POU3F2 dependent manner. Can activate transcription directly or via association with the transcription machinery. May be involved in ATXN1 mutant-induced cell death. The interaction with ATXN1 mutant reduces levels of phosphorylated RNA polymerase II large subunit. Involved in the assembly of cytoplasmic stress granule, possibly by participating in the transport of neuronal RNA granules. Also acts as an innate immune sensor of infection by retroviruses, by detecting the presence of reverse-transcribed DNA in the cytosol. Directly binds retroviral reverse-transcribed DNA in the cytosol and interacts with CGAS, leading to activate the cGAS-STING signaling pathway, triggering type-I interferon production. This Gorilla gorilla gorilla (Western lowland gorilla) protein is Polyglutamine-binding protein 1 (PQBP1).